The chain runs to 177 residues: MSWQAAVEKTVTGFGYELVECERGSQGLLRVFIDRVPGQVYDGGPGEFVTVEDCEKVTRQLQYVLEVENCDYSRLEVSSPGLDRPLKKSADYARFAGERIDITLKLPFQGRKKYQGVLAASGEAWELHFNDGKQDQVLGFTLEEVRDARLVPVVDFKGRKGKEPAEPAAQVPGGYEQ.

This sequence belongs to the RimP family.

The protein resides in the cytoplasm. In terms of biological role, required for maturation of 30S ribosomal subunits. The polypeptide is Ribosome maturation factor RimP (Methylibium petroleiphilum (strain ATCC BAA-1232 / LMG 22953 / PM1)).